We begin with the raw amino-acid sequence, 96 residues long: Aspartyl/glutamyl-tRNA(Asn/Gln) amidotransferase subunit C (96 aa).

Belongs to the GatC family. As to quaternary structure, heterotrimer of A, B and C subunits.

The enzyme catalyses L-glutamyl-tRNA(Gln) + L-glutamine + ATP + H2O = L-glutaminyl-tRNA(Gln) + L-glutamate + ADP + phosphate + H(+). It catalyses the reaction L-aspartyl-tRNA(Asn) + L-glutamine + ATP + H2O = L-asparaginyl-tRNA(Asn) + L-glutamate + ADP + phosphate + 2 H(+). Functionally, allows the formation of correctly charged Asn-tRNA(Asn) or Gln-tRNA(Gln) through the transamidation of misacylated Asp-tRNA(Asn) or Glu-tRNA(Gln) in organisms which lack either or both of asparaginyl-tRNA or glutaminyl-tRNA synthetases. The reaction takes place in the presence of glutamine and ATP through an activated phospho-Asp-tRNA(Asn) or phospho-Glu-tRNA(Gln). This Geobacillus kaustophilus (strain HTA426) protein is Aspartyl/glutamyl-tRNA(Asn/Gln) amidotransferase subunit C.